Reading from the N-terminus, the 87-residue chain is DNA polymerase epsilon subunit C (87 aa).

As to quaternary structure, DNA polymerase epsilon is a heterotetramer consisting of cdc20/Pol2, dpb2, dpb3, and dpb4. Also forms a heterodimer consisting dpb3 and dpb4. Interacts directly with cdc20/pol2 and dpb4.

It localises to the nucleus. Its function is as follows. As accessory component of the DNA polymerase epsilon (DNA polymerase II) participates in chromosomal DNA replication. It is required during synthesis of the leading and lagging DNA strands at the replication fork and binds at/or near replication origins and moves along DNA with the replication fork. It has 3'-5' proofreading exonuclease activity that correct errors arising during DNA replication. It is also involved in DNA synthesis during DNA repair. The dpb3-dpb4 dimer associates with histone deacetylases, chromatin remodelers, and histones and plays a crucial role in the inheritance of histone hypoacetylation and H3K9 methylation in heterochromatin. The dpb3-dpb4 dimer is also required for the recruitment of sir2 to heterochromatin. The protein is DNA polymerase epsilon subunit C of Schizosaccharomyces pombe (strain 972 / ATCC 24843) (Fission yeast).